The chain runs to 529 residues: Bifunctional purine biosynthesis protein PurH (529 aa).

Residues 1 to 148 (MEQSFLPIRC…KNYKYVTVVV (148 aa)) form the MGS-like domain.

This sequence belongs to the PurH family.

The catalysed reaction is (6R)-10-formyltetrahydrofolate + 5-amino-1-(5-phospho-beta-D-ribosyl)imidazole-4-carboxamide = 5-formamido-1-(5-phospho-D-ribosyl)imidazole-4-carboxamide + (6S)-5,6,7,8-tetrahydrofolate. It carries out the reaction IMP + H2O = 5-formamido-1-(5-phospho-D-ribosyl)imidazole-4-carboxamide. It functions in the pathway purine metabolism; IMP biosynthesis via de novo pathway; 5-formamido-1-(5-phospho-D-ribosyl)imidazole-4-carboxamide from 5-amino-1-(5-phospho-D-ribosyl)imidazole-4-carboxamide (10-formyl THF route): step 1/1. It participates in purine metabolism; IMP biosynthesis via de novo pathway; IMP from 5-formamido-1-(5-phospho-D-ribosyl)imidazole-4-carboxamide: step 1/1. The protein is Bifunctional purine biosynthesis protein PurH of Wigglesworthia glossinidia brevipalpis.